We begin with the raw amino-acid sequence, 1582 residues long: Hybrid PKS-NRPS synthetase TAS1 (1582 aa).

The interval 33–387 is condensation (C) domain; that stretch reads IPLSKVQEVL…GEDTAAASRV (355 aa). Residues 499–892 form an adenylation (A) domain region; the sequence is RSRAATQPDE…KLHILGRMNN (394 aa). In terms of domain architecture, Carrier spans 1015 to 1092; the sequence is NLVDRLEASI…RQAQRLSELV (78 aa). The 448-residue stretch at 1127–1574 folds into the Ketosynthase family 3 (KS3) domain; that stretch reads APLFAIVGMA…GVNAHCILAS (448 aa). Catalysis depends on for beta-ketoacyl synthase activity residues C1294 and H1432. The tract at residues 1460 to 1485 is disordered; sequence ESRCSSGAISPTGTEQQPSDTKQTPR. Over residues 1462-1485 the composition is skewed to polar residues; that stretch reads RCSSGAISPTGTEQQPSDTKQTPR. N1498 functions as the For beta-ketoacyl synthase activity in the catalytic mechanism.

This sequence in the N-terminal section; belongs to the NRP synthetase family. Requires pantetheine 4'-phosphate as cofactor.

It carries out the reaction acetoacetyl-CoA + L-isoleucine + ATP = tenuazonic acid + AMP + diphosphate + CoA + 2 H(+). Functionally, hybrid PKS-NRPS synthetase that mediates the biosynthesis of the toxin tenuazonic acid (TeA), an inhibitor of protein biosynthesis on ribosomes by suppressing the release of new protein. TAS1 alone is sufficient for TeA synthesis via the condensation of isoleucine (Ile) with acetoacetyl-CoA by the N-terminal NRPS module and subsequent cyclization conducted by the C-terminal KS domain. The protein is Hybrid PKS-NRPS synthetase TAS1 of Cordyceps militaris (strain CM01) (Caterpillar fungus).